The sequence spans 455 residues: uncharacterized protein (455 aa).

Helical transmembrane passes span 26 to 46 (FGPGVVALGIIAAVTLLQLLI), 53 to 73 (GAWGAIASMWLGVHLVPISIG), 77 to 97 (LGVMPLLPVLLMVWATARSTA), 111 to 131 (WVVASALGGPLLMAAIALAVI), 146 to 166 (ALRAFTSVLVVHSVGAATGVW), 191 to 211 (AAGVLALLGLSGVVTAGSLVV), 232 to 252 (LTVLSVLYAPNVIVGTSAIAV), 256 to 276 (AHIGFATFSSFAVLGGDIPAL), 278 to 298 (ILAAAPTPPLGPAWVALLIVG), 323 to 343 (LLVAAVAGALVMAVLGYGGGG), and 357 to 377 (ALVLGVLFWFTFVGWVTVVIA). Residues 384–455 (PKRLRPAPPV…LSDEPPPRAD (72 aa)) form a disordered region.

It localises to the cell membrane. This is an uncharacterized protein from Mycobacterium tuberculosis (strain CDC 1551 / Oshkosh).